A 557-amino-acid chain; its full sequence is Aspartate--tRNA ligase (557 aa).

Glu168 contacts L-aspartate. The tract at residues 192-195 (QIYK) is aspartate. Arg214 lines the L-aspartate pocket. ATP contacts are provided by residues 214–216 (RDE) and Gln223. An L-aspartate-binding site is contributed by His423. Residue Glu457 participates in ATP binding. Arg464 serves as a coordination point for L-aspartate. 505–508 (GLDR) contacts ATP.

The protein belongs to the class-II aminoacyl-tRNA synthetase family. Type 1 subfamily. In terms of assembly, homodimer.

The protein localises to the cytoplasm. It carries out the reaction tRNA(Asp) + L-aspartate + ATP = L-aspartyl-tRNA(Asp) + AMP + diphosphate. Catalyzes the attachment of L-aspartate to tRNA(Asp) in a two-step reaction: L-aspartate is first activated by ATP to form Asp-AMP and then transferred to the acceptor end of tRNA(Asp). This Mycoplasma pneumoniae (strain ATCC 29342 / M129 / Subtype 1) (Mycoplasmoides pneumoniae) protein is Aspartate--tRNA ligase.